The primary structure comprises 264 residues: MSKLKLHGFNNLTKSLSFCIYDICYAKTADDRDGYIAYIDEQYNANRLTEILTETCSIIGANILNIARQDYDPQGASVTILVSEEPVDPRDVDTSEHPGPLPSAVVAHLDKSHICVHTYPESHPEGGLCTFRADIEVSTCGVISPLKALNYLIHQLESDIVTMDYRVRGFTRDINGVKHFIDHKINSIQNFMSDDMKSLYHMMDVNVYQENIFHTKMMLKDFDLKHYLFNAKPEELSAEERERITHLLYKEMQEIYYGRNVPEV.

The Schiff-base intermediate with substrate; via pyruvic acid role is filled by Ser-112. At Ser-112 the chain carries Pyruvic acid (Ser); by autocatalysis. Residue His-117 is the Proton acceptor; for processing activity of the active site. Cys-140 serves as the catalytic Proton donor; for catalytic activity.

The protein belongs to the prokaryotic AdoMetDC family. Type 2 subfamily. As to quaternary structure, heterooctamer of four alpha and four beta chains arranged as a tetramer of alpha/beta heterodimers. Requires pyruvate as cofactor. Post-translationally, is synthesized initially as an inactive proenzyme. Formation of the active enzyme involves a self-maturation process in which the active site pyruvoyl group is generated from an internal serine residue via an autocatalytic post-translational modification. Two non-identical subunits are generated from the proenzyme in this reaction, and the pyruvate is formed at the N-terminus of the alpha chain, which is derived from the carboxyl end of the proenzyme. The post-translation cleavage follows an unusual pathway, termed non-hydrolytic serinolysis, in which the side chain hydroxyl group of the serine supplies its oxygen atom to form the C-terminus of the beta chain, while the remainder of the serine residue undergoes an oxidative deamination to produce ammonia and the pyruvoyl group blocking the N-terminus of the alpha chain.

It carries out the reaction S-adenosyl-L-methionine + H(+) = S-adenosyl 3-(methylsulfanyl)propylamine + CO2. It participates in amine and polyamine biosynthesis; S-adenosylmethioninamine biosynthesis; S-adenosylmethioninamine from S-adenosyl-L-methionine: step 1/1. Catalyzes the decarboxylation of S-adenosylmethionine to S-adenosylmethioninamine (dcAdoMet), the propylamine donor required for the synthesis of the polyamines spermine and spermidine from the diamine putrescine. The protein is S-adenosylmethionine decarboxylase proenzyme of Yersinia enterocolitica serotype O:8 / biotype 1B (strain NCTC 13174 / 8081).